A 302-amino-acid polypeptide reads, in one-letter code: Putative beta-glucosidase 17 (302 aa).

Residues 1-27 (MMAVAAATRIAVVVVAALAALAPGARG) form the signal peptide. Residues Gln47, His149, and 194–195 (NE) contribute to the a beta-D-glucoside site. Glu195 functions as the Proton donor in the catalytic mechanism. Cys214 and Cys221 are disulfide-bonded. Residue Asn274 is glycosylated (N-linked (GlcNAc...) asparagine).

This sequence belongs to the glycosyl hydrolase 1 family.

It catalyses the reaction Hydrolysis of terminal, non-reducing beta-D-glucosyl residues with release of beta-D-glucose.. The sequence is that of Putative beta-glucosidase 17 (BGLU17) from Oryza sativa subsp. japonica (Rice).